A 141-amino-acid chain; its full sequence is Brain ribonuclease (141 aa).

Residues 1–25 (KETAAAKFRRQHMDSGSSSSSNSNY) form a disordered region. Substrate-binding residues include lysine 7 and arginine 10. Histidine 12 (proton acceptor) is an active-site residue. Over residues 15 to 24 (SGSSSSSNSN) the composition is skewed to low complexity. Intrachain disulfides connect cysteine 26–cysteine 84, cysteine 40–cysteine 95, cysteine 58–cysteine 110, and cysteine 65–cysteine 72. Substrate is bound at residue 41–45 (KPVNT). Asparagine 62 carries N-linked (GlcNAc...) asparagine glycosylation. Lysine 66 and arginine 85 together coordinate substrate. Histidine 119 functions as the Proton donor in the catalytic mechanism. O-linked (GalNAc...) threonine glycosylation is present at threonine 129.

Belongs to the pancreatic ribonuclease family.

It localises to the secreted. The protein is Brain ribonuclease (BRN) of Giraffa camelopardalis (Giraffe).